The chain runs to 404 residues: Argininosuccinate synthase (404 aa).

Residues 10 to 18 (AYSGGLDTS) and A37 contribute to the ATP site. L-citrulline is bound by residues Y90 and S95. G120 provides a ligand contact to ATP. Residues T122, N126, and D127 each coordinate L-aspartate. L-citrulline is bound at residue N126. Residues R130, S181, S190, E266, and Y278 each coordinate L-citrulline.

It belongs to the argininosuccinate synthase family. Type 1 subfamily. Homotetramer.

The protein resides in the cytoplasm. It carries out the reaction L-citrulline + L-aspartate + ATP = 2-(N(omega)-L-arginino)succinate + AMP + diphosphate + H(+). The protein operates within amino-acid biosynthesis; L-arginine biosynthesis; L-arginine from L-ornithine and carbamoyl phosphate: step 2/3. The sequence is that of Argininosuccinate synthase from Erythrobacter litoralis (strain HTCC2594).